Here is a 264-residue protein sequence, read N- to C-terminus: Synaptophysin-like protein 2 (264 aa).

At 1–33 the chain is on the cytoplasmic side; it reads MSSTESPSRAADKSPRQQVDRLLEGLRWRRLEE. The region spanning 30–238 is the MARVEL domain; it reads RLEEPLGFIK…NCWFVFKETP (209 aa). The chain crosses the membrane as a helical span at residues 34-54; that stretch reads PLGFIKVLQWLFAIFAFGSCG. Over 55 to 116 the chain is Vesicular; sequence SYSGETGAMV…LMGDFSAPAE (62 aa). A helical membrane pass occupies residues 117-137; that stretch reads FFVTLGIFSFFYTMAALVVYL. Topologically, residues 138–150 are cytoplasmic; it reads RFHKLYTENKRFP. Residues 151-171 form a helical membrane-spanning segment; it reads LVDFCVTVSFTFFWLVAAAAW. Residues 172-213 lie on the Vesicular side of the membrane; that stretch reads GKGLTDVKGATRPSSLTAAMSVCHGEEAVCSAGATPSMGLAN. Residue Asn-213 is glycosylated (N-linked (GlcNAc...) asparagine). The chain crosses the membrane as a helical span at residues 214 to 234; it reads ISVLFGFINFFLWAGNCWFVF. Over 235–264 the chain is Cytoplasmic; it reads KETPWHGQGQDQGQGPSQESAAEQGAVEKQ. The disordered stretch occupies residues 242 to 264; it reads QGQDQGQGPSQESAAEQGAVEKQ.

The protein belongs to the synaptophysin/synaptobrevin family. Skeletal muscle.

The protein localises to the membrane. In terms of biological role, involved in communication between the T-tubular and junctional sarcoplasmic reticulum (SR) membranes. The sequence is that of Synaptophysin-like protein 2 (SYPL2) from Oryctolagus cuniculus (Rabbit).